The primary structure comprises 291 residues: ATP synthase gamma chain (291 aa).

It belongs to the ATPase gamma chain family. F-type ATPases have 2 components, CF(1) - the catalytic core - and CF(0) - the membrane proton channel. CF(1) has five subunits: alpha(3), beta(3), gamma(1), delta(1), epsilon(1). CF(0) has three main subunits: a, b and c.

It is found in the cell inner membrane. Functionally, produces ATP from ADP in the presence of a proton gradient across the membrane. The gamma chain is believed to be important in regulating ATPase activity and the flow of protons through the CF(0) complex. The chain is ATP synthase gamma chain from Rhodopseudomonas palustris (strain ATCC BAA-98 / CGA009).